Here is a 128-residue protein sequence, read N- to C-terminus: Ribosome-binding factor A (128 aa).

Belongs to the RbfA family. In terms of assembly, monomer. Binds 30S ribosomal subunits, but not 50S ribosomal subunits or 70S ribosomes.

The protein resides in the cytoplasm. Functionally, one of several proteins that assist in the late maturation steps of the functional core of the 30S ribosomal subunit. Associates with free 30S ribosomal subunits (but not with 30S subunits that are part of 70S ribosomes or polysomes). Required for efficient processing of 16S rRNA. May interact with the 5'-terminal helix region of 16S rRNA. The protein is Ribosome-binding factor A of Haemophilus influenzae (strain 86-028NP).